Reading from the N-terminus, the 832-residue chain is Valine--tRNA ligase (832 aa).

The 'HIGH' region motif lies at 41 to 51 (PNVTGKLHLGH). Positions 512–516 (KMSKS) match the 'KMSKS' region motif. Lysine 515 contributes to the ATP binding site. A coiled-coil region spans residues 760-831 (FIEISQEQKQ…QIYLEELKWK (72 aa)).

It belongs to the class-I aminoacyl-tRNA synthetase family. ValS type 1 subfamily. As to quaternary structure, monomer.

It is found in the cytoplasm. The enzyme catalyses tRNA(Val) + L-valine + ATP = L-valyl-tRNA(Val) + AMP + diphosphate. In terms of biological role, catalyzes the attachment of valine to tRNA(Val). As ValRS can inadvertently accommodate and process structurally similar amino acids such as threonine, to avoid such errors, it has a 'posttransfer' editing activity that hydrolyzes mischarged Thr-tRNA(Val) in a tRNA-dependent manner. This chain is Valine--tRNA ligase, found in Mycoplasmopsis synoviae (strain 53) (Mycoplasma synoviae).